Reading from the N-terminus, the 109-residue chain is Flagellar hook-basal body complex protein FliE 2 (109 aa).

Belongs to the FliE family.

It is found in the bacterial flagellum basal body. The sequence is that of Flagellar hook-basal body complex protein FliE 2 (fliE2) from Bradyrhizobium diazoefficiens (strain JCM 10833 / BCRC 13528 / IAM 13628 / NBRC 14792 / USDA 110).